The chain runs to 188 residues: Defensin-like protein 99 (188 aa).

The N-terminal stretch at Met1–Ala28 is a signal peptide. 7 cysteine pairs are disulfide-bonded: Cys37/Cys95, Cys45/Cys77, Cys58/Cys92, Cys62/Cys94, Cys123/Cys178, Cys137/Cys175, and Cys141/Cys177.

The protein belongs to the DEFL family.

It is found in the secreted. The polypeptide is Defensin-like protein 99 (Arabidopsis thaliana (Mouse-ear cress)).